We begin with the raw amino-acid sequence, 594 residues long: Alanine--tRNA ligase (594 aa).

The Zn(2+) site is built by H456, H460, C558, and H562.

The protein belongs to the class-II aminoacyl-tRNA synthetase family. Requires Zn(2+) as cofactor.

The protein resides in the cytoplasm. It catalyses the reaction tRNA(Ala) + L-alanine + ATP = L-alanyl-tRNA(Ala) + AMP + diphosphate. Catalyzes the attachment of alanine to tRNA(Ala) in a two-step reaction: alanine is first activated by ATP to form Ala-AMP and then transferred to the acceptor end of tRNA(Ala). Also edits incorrectly charged Ser-tRNA(Ala) and Gly-tRNA(Ala) via its editing domain. The polypeptide is Alanine--tRNA ligase (alaS) (Borreliella burgdorferi (strain ATCC 35210 / DSM 4680 / CIP 102532 / B31) (Borrelia burgdorferi)).